Consider the following 191-residue polypeptide: Protein HP-20 homolog (191 aa).

The first 16 residues, Met1–Ala16, serve as a signal peptide directing secretion. One can recognise a Collagen-like domain in the interval Gly22–Gly58. The interval Gly22–Val61 is disordered. Over residues Pro26–Arg39 the composition is skewed to pro residues. One can recognise a C1q domain in the interval Pro64–Thr191.

Its subcellular location is the secreted. The chain is Protein HP-20 homolog from Bos taurus (Bovine).